We begin with the raw amino-acid sequence, 479 residues long: Cardiolipin synthase A (479 aa).

Transmembrane regions (helical) follow at residues 8–28 (LLAYFIATLHFLGTLAAIHAV) and 38–58 (IAWALSLMFMPYLTLIPYLIF). 2 consecutive PLD phosphodiesterase domains span residues 218 to 245 (VNFRNHRKIVVVDGITGFVGGHNVGDEY) and 392 to 419 (TPGFLHQKVVLVDSEISAIGSANMDNRS). Catalysis depends on residues His223, Lys225, Asp230, His397, Lys399, and Asp404.

The protein belongs to the phospholipase D family. Cardiolipin synthase subfamily. ClsA sub-subfamily.

The protein localises to the cell inner membrane. It catalyses the reaction 2 a 1,2-diacyl-sn-glycero-3-phospho-(1'-sn-glycerol) = a cardiolipin + glycerol. Functionally, catalyzes the reversible phosphatidyl group transfer from one phosphatidylglycerol molecule to another to form cardiolipin (CL) (diphosphatidylglycerol) and glycerol. The chain is Cardiolipin synthase A from Pseudomonas fluorescens (strain SBW25).